The sequence spans 416 residues: Phosphatidylinositol 5-phosphate 4-kinase type-2 gamma (416 aa).

Residues 38–415 (ASDPMLSVFM…RFREFISNIF (378 aa)) form the PIPK domain.

In terms of processing, phosphorylated, phosphorylation is induced by EGF.

It localises to the endoplasmic reticulum. Its subcellular location is the cytoplasm. The catalysed reaction is a 1,2-diacyl-sn-glycero-3-phospho-(1D-myo-inositol-5-phosphate) + ATP = a 1,2-diacyl-sn-glycero-3-phospho-(1D-myo-inositol-4,5-bisphosphate) + ADP + H(+). The enzyme catalyses 1,2-dihexadecanoyl-sn-glycero-3-phospho-(1D-myo-inositol-5-phosphate) + ATP = 1,2-dihexadecanoyl-sn-glycero-3-phospho-(1D-myo-inositol-4,5-bisphosphate) + ADP + H(+). It catalyses the reaction 1,2-dihexadecanoyl-sn-glycero-3-phospho-(1D-myo-inositol-5-phosphate) + GTP = 1,2-dihexadecanoyl-sn-glycero-3-phospho-(1D-myo-inositol-4,5-bisphosphate) + GDP + H(+). Functionally, phosphatidylinositol 5-phosphate 4-kinase with low enzymatic activity. May be a GTP sensor, has higher GTP-dependent kinase activity than ATP-dependent kinase activity. The sequence is that of Phosphatidylinositol 5-phosphate 4-kinase type-2 gamma (pip4k2c) from Danio rerio (Zebrafish).